A 224-amino-acid chain; its full sequence is Cytochrome c oxidase subunit 2 (224 aa).

Over 1 to 26 (MSTWGQINLMDPASPIQMEMMLFHDH) the chain is Mitochondrial intermembrane. A helical membrane pass occupies residues 27 to 48 (AMAILIGIFTLVSLLGVKLCFN). The Mitochondrial matrix portion of the chain corresponds to 49-62 (TLSTRTMHEAQLLE). Residues 63–82 (TLWTILPAFLLVWLALPSLR) traverse the membrane as a helical segment. The Mitochondrial intermembrane segment spans residues 83–224 (LLYLLDEQGS…DVKDFIKMCN (142 aa)). H161, C196, E198, C200, H204, and M207 together coordinate Cu cation. Position 198 (E198) interacts with Mg(2+).

Belongs to the cytochrome c oxidase subunit 2 family. In terms of assembly, component of the cytochrome c oxidase (complex IV, CIV), a multisubunit enzyme composed of a catalytic core of 3 subunits and several supernumerary subunits. The complex exists as a monomer or a dimer and forms supercomplexes (SCs) in the inner mitochondrial membrane with ubiquinol-cytochrome c oxidoreductase (cytochrome b-c1 complex, complex III, CIII). Cu cation is required as a cofactor.

Its subcellular location is the mitochondrion inner membrane. The catalysed reaction is 4 Fe(II)-[cytochrome c] + O2 + 8 H(+)(in) = 4 Fe(III)-[cytochrome c] + 2 H2O + 4 H(+)(out). Its function is as follows. Component of the cytochrome c oxidase, the last enzyme in the mitochondrial electron transport chain which drives oxidative phosphorylation. The respiratory chain contains 3 multisubunit complexes succinate dehydrogenase (complex II, CII), ubiquinol-cytochrome c oxidoreductase (cytochrome b-c1 complex, complex III, CIII) and cytochrome c oxidase (complex IV, CIV), that cooperate to transfer electrons derived from NADH and succinate to molecular oxygen, creating an electrochemical gradient over the inner membrane that drives transmembrane transport and the ATP synthase. Cytochrome c oxidase is the component of the respiratory chain that catalyzes the reduction of oxygen to water. Electrons originating from reduced cytochrome c in the intermembrane space (IMS) are transferred via the dinuclear copper A center (CU(A)) of subunit 2 and heme A of subunit 1 to the active site in subunit 1, a binuclear center (BNC) formed by heme A3 and copper B (CU(B)). The BNC reduces molecular oxygen to 2 water molecules using 4 electrons from cytochrome c in the IMS and 4 protons from the mitochondrial matrix. In Albinaria caerulea (Land snail), this protein is Cytochrome c oxidase subunit 2 (COII).